A 485-amino-acid chain; its full sequence is Regulatory protein ViaA (485 aa).

The protein belongs to the ViaA family. In terms of assembly, homodimer. Interacts with RavA.

It is found in the cytoplasm. Component of the RavA-ViaA chaperone complex, which may act on the membrane to optimize the function of some of the respiratory chains. ViaA stimulates the ATPase activity of RavA. The protein is Regulatory protein ViaA of Proteus mirabilis (strain HI4320).